The following is a 436-amino-acid chain: Histidine--tRNA ligase (436 aa).

Belongs to the class-II aminoacyl-tRNA synthetase family. In terms of assembly, homodimer.

Its subcellular location is the cytoplasm. The catalysed reaction is tRNA(His) + L-histidine + ATP = L-histidyl-tRNA(His) + AMP + diphosphate + H(+). This chain is Histidine--tRNA ligase, found in Prochlorococcus marinus (strain MIT 9303).